The chain runs to 520 residues: Glucose starvation modulator protein 1 (520 aa).

Positions 20–48 (CSFCHSKHLQCSNNRPCKNCVKRNIADQC) form a DNA-binding region, zn(2)-C6 fungal-type. Disordered regions lie at residues 63–104 (AKNK…SSGR) and 194–213 (PASP…PNEM). Residues 74–85 (SLESSSSPFSPL) show a composition bias toward low complexity. Positions 90-104 (INSQSSQPLDPSSGR) are enriched in polar residues. Residues 376–445 (DYEKLSHLNS…FKLFKSVAVG (70 aa)) form the PAS domain.

The protein belongs to the ERT1/acuK family.

It localises to the nucleus. Transcription factor which regulates nonfermentable carbon utilization. This is Glucose starvation modulator protein 1 (GSM1) from Meyerozyma guilliermondii (strain ATCC 6260 / CBS 566 / DSM 6381 / JCM 1539 / NBRC 10279 / NRRL Y-324) (Yeast).